Here is a 160-residue protein sequence, read N- to C-terminus: Cytochrome b6-f complex subunit 4 (160 aa).

Helical transmembrane passes span 36–56 (LLYI…GLAV), 95–115 (LLGV…PFLE), and 131–151 (TVFL…TLPI).

It belongs to the cytochrome b family. PetD subfamily. The 4 large subunits of the cytochrome b6-f complex are cytochrome b6, subunit IV (17 kDa polypeptide, petD), cytochrome f and the Rieske protein, while the 4 small subunits are petG, petL, petM and petN. The complex functions as a dimer.

The protein resides in the plastid. Its subcellular location is the chloroplast thylakoid membrane. Functionally, component of the cytochrome b6-f complex, which mediates electron transfer between photosystem II (PSII) and photosystem I (PSI), cyclic electron flow around PSI, and state transitions. This is Cytochrome b6-f complex subunit 4 from Amborella trichopoda.